A 235-amino-acid polypeptide reads, in one-letter code: MIPWLTDRPAFPPVERALTEPNGLLAAGGRLTPEWLLAAYRRGIFPWYSDGEPILWWSPDPRLVLQPAQIRITRSLRKVLRGRRFEVRFDTAFARVIEECAAPREPGGGTWITPEIRAAYLRMHELGYAHSVESWLDGRLVGGLYGMALGRAFFGESMFSRVSDASKVALAHLARFLEQRDFGVIDCQMTTPHLLSMGAHEIARREFCAGLERWTVEGPPPAKWSGTTAAEFDWN.

It belongs to the L/F-transferase family.

The protein localises to the cytoplasm. The catalysed reaction is N-terminal L-lysyl-[protein] + L-leucyl-tRNA(Leu) = N-terminal L-leucyl-L-lysyl-[protein] + tRNA(Leu) + H(+). It catalyses the reaction N-terminal L-arginyl-[protein] + L-leucyl-tRNA(Leu) = N-terminal L-leucyl-L-arginyl-[protein] + tRNA(Leu) + H(+). It carries out the reaction L-phenylalanyl-tRNA(Phe) + an N-terminal L-alpha-aminoacyl-[protein] = an N-terminal L-phenylalanyl-L-alpha-aminoacyl-[protein] + tRNA(Phe). In terms of biological role, functions in the N-end rule pathway of protein degradation where it conjugates Leu, Phe and, less efficiently, Met from aminoacyl-tRNAs to the N-termini of proteins containing an N-terminal arginine or lysine. In Azoarcus sp. (strain BH72), this protein is Leucyl/phenylalanyl-tRNA--protein transferase.